Consider the following 276-residue polypeptide: Aspartate dehydrogenase domain-containing protein (276 aa).

Belongs to the L-aspartate dehydrogenase family.

This is Aspartate dehydrogenase domain-containing protein (aspdh) from Danio rerio (Zebrafish).